The chain runs to 372 residues: Rab9 effector protein with kelch motifs (372 aa).

Kelch repeat units lie at residues 49–95, 100–146, 151–203, 204–250, and 254–303; these read KVFI…FLPS, SIWV…TSSA, HLYV…AAGT, KLFI…AAVA, and HVYV…VIPW. The segment at 321–342 is disordered; it reads LQDEKGDAAEKPETRSGGSREE. Residues 322 to 342 show a composition bias toward basic and acidic residues; that stretch reads QDEKGDAAEKPETRSGGSREE. The Kelch 6 repeat unit spans residues 349–372; the sequence is LCFVFGGMNTEGEIYDDCLVTVVD.

In terms of assembly, interacts with PIKFYVE; the interaction recruits RABEPK to the endosomal membrane. Interacts with RAB9 in its GTP-bound conformation. Phosphorylated on Ser residues by PIKFYVE.

It localises to the cytoplasm. The protein localises to the endosome membrane. Rab9 effector required for endosome to trans-Golgi network (TGN) transport. The polypeptide is Rab9 effector protein with kelch motifs (Rabepk) (Rattus norvegicus (Rat)).